The primary structure comprises 802 residues: Protein SBE22 (802 aa).

Disordered stretches follow at residues 207–230 (SSTINANNMKSTGTLPPFRPRSNS) and 323–345 (SGDPKHVRSHQSKPQPRFPQRHN).

Belongs to the SBE2 family.

The protein resides in the cytoplasm. The protein localises to the golgi apparatus. With SBE2, is involved in cell wall integrity and polarity processes like bud growth. In Vanderwaltozyma polyspora (strain ATCC 22028 / DSM 70294 / BCRC 21397 / CBS 2163 / NBRC 10782 / NRRL Y-8283 / UCD 57-17) (Kluyveromyces polysporus), this protein is Protein SBE22 (SBE22).